We begin with the raw amino-acid sequence, 326 residues long: Organic solute transporter subunit alpha (326 aa).

Residues 1–28 are Extracellular-facing; the sequence is METSNFTLFDPRCRAEAPFAIDAIKQLD. N-linked (GlcNAc...) asparagine glycosylation occurs at asparagine 5. Residues 29-49 form a helical membrane-spanning segment; that stretch reads IFGKVLYTVLTLMATASMLVF. Topologically, residues 50 to 67 are cytoplasmic; sequence IEECIYIYKKVPAHKKST. Residues 68–88 form a helical membrane-spanning segment; sequence IIWVTGVAPVMAIMSCLGMWV. The Extracellular segment spans residues 89-99; the sequence is PRATMFTDMTS. The helical transmembrane segment at 100–120 threads the bilayer; sequence ATYFAIVVFKFLILMIEEVGG. Topologically, residues 121–161 are cytoplasmic; that stretch reads DNAFLRRCEKQTFKISTGPCCCCCPCLPNVPITRRSLFILK. Residues 162-182 traverse the membrane as a helical segment; sequence LGSYQFALMKLVLTIFSIVLW. Residues 183–198 are Extracellular-facing; the sequence is TNGSFSLTNVSASGAA. Asparagine 184 and asparagine 191 each carry an N-linked (GlcNAc...) asparagine glycan. A helical membrane pass occupies residues 199–219; that stretch reads IWINSFIGVLTIIALWPVAIM. Residues 220–237 are Cytoplasmic-facing; the sequence is FMHVREALRTLKIVPKYA. A helical membrane pass occupies residues 238–258; that stretch reads MYQLVLILSQLQTAIINILAL. Asparagine 259 carries N-linked (GlcNAc...) asparagine glycosylation. The Extracellular portion of the chain corresponds to 259 to 275; the sequence is NGTIACSPPYSSQARGY. A helical membrane pass occupies residues 276-296; it reads MMSQQLLIVEMFIITLVTRVL. The Cytoplasmic segment spans residues 297-326; it reads YRRQYEPIPEPDDVEEKKTVLSSKKAIDVA.

This sequence belongs to the OST-alpha family. Interacts with slc51b. The Ost-alpha/Ost-beta complex is a heterodimer composed of alpha (slc51a) and beta (slc51b) subunit.

The protein localises to the cell membrane. Its subcellular location is the endoplasmic reticulum membrane. The enzyme catalyses taurocholate(out) = taurocholate(in). It catalyses the reaction prostaglandin E2(out) = prostaglandin E2(in). The catalysed reaction is estrone 3-sulfate(out) = estrone 3-sulfate(in). It carries out the reaction dehydroepiandrosterone 3-sulfate(out) = dehydroepiandrosterone 3-sulfate(in). The enzyme catalyses tauroursodeoxycholate(out) = tauroursodeoxycholate(in). It catalyses the reaction glycoursodeoxycholate(out) = glycoursodeoxycholate(in). The catalysed reaction is glycocholate(out) = glycocholate(in). It carries out the reaction taurochenodeoxycholate(out) = taurochenodeoxycholate(in). The enzyme catalyses glycochenodeoxycholate(out) = glycochenodeoxycholate(in). It catalyses the reaction taurodeoxycholate(out) = taurodeoxycholate(in). The catalysed reaction is glycodeoxycholate(out) = glycodeoxycholate(in). Essential component of the Ost-alpha/Ost-beta complex, a heterodimer that acts as the intestinal basolateral transporter responsible for the translocation of bile acids (such as taurocholate), steroids (such as estrone sulfate), and eicosanoids (such as prostaglandin E2). This Danio rerio (Zebrafish) protein is Organic solute transporter subunit alpha (slc51a).